The sequence spans 144 residues: Large ribosomal subunit protein uL15 (144 aa).

The interval 1 to 52 is disordered; the sequence is MRLNTLSPANGARHSRKRLGRGIGSGFGKTSGRGHKGQKSRSGSSIRRGFEG. Gly residues predominate over residues 21-31; that stretch reads RGIGSGFGKTS.

The protein belongs to the universal ribosomal protein uL15 family. Part of the 50S ribosomal subunit.

Binds to the 23S rRNA. This Buchnera aphidicola subsp. Acyrthosiphon pisum (strain 5A) protein is Large ribosomal subunit protein uL15.